A 1107-amino-acid chain; its full sequence is Ubiquitin-associated protein 2-like (1107 aa).

N-acetylmethionine is present on M1. The tract at residues 1 to 33 (MMTSVGTNRARGNWEQPQNQNQTQHKQRPQATA) is disordered. Residues 49–89 (DFEEKVKQLIDITGKNQDECVIALHDCNGDVNRAINVLLEG) enclose the UBA domain. The segment at 92–229 (DTHSWEMVGK…NTWNNTGHFE (138 aa)) is disordered. The segment covering 118 to 132 (EEGKENRDRDRDYSR) has biased composition (basic and acidic residues). Over residues 133-145 (RRGGPPRRGRGAS) the composition is skewed to basic residues. R187 and R190 each carry asymmetric dimethylarginine. The span at 213 to 226 (NYGNSSGNTWNNTG) shows a compositional bias: low complexity. Phosphoserine is present on residues S376, S380, and S436. A Phosphothreonine modification is found at T445. Disordered stretches follow at residues 461 to 513 (AVAT…KKTS), 550 to 676 (SDYE…IPSL), and 689 to 814 (ANQH…LPPG). A phosphoserine mark is found at S474, S487, S490, S491, and S497. Low complexity-rich tracts occupy residues 494-505 (QSSSPQPAQQKL) and 554-589 (STPT…SQES). Polar residues predominate over residues 590–656 (GYQSGPIQST…TQLQTTQSVE (67 aa)). A phosphoserine mark is found at S624, S625, S628, and S629. Positions 665-675 (SESPSTSSIPS) are enriched in low complexity. Residues 689–713 (ANQHSSSLSGLSHTEEIPNTTTTQH) are compositionally biased toward polar residues. Low complexity predominate over residues 714 to 804 (SSALSTQQNT…STRSSVATTS (91 aa)). Phosphoserine occurs at positions 872 and 879. Disordered stretches follow at residues 885-921 (FGRG…LNPA) and 1060-1107 (QQPH…WGAN). 2 stretches are compositionally biased toward low complexity: residues 893–916 (PAPA…TQQT) and 1073–1087 (QDGQ…QTSS). Over residues 1088–1107 (IPQKPQTNKSAYNSYSWGAN) the composition is skewed to polar residues.

As to quaternary structure, interacts with BMI1. Part of a complex consisting of UBAP2L, BMI1 and RNF2. Interacts with G3BP1 (via NTF2 domain); promoting stress granule formation.

The protein resides in the nucleus. Its subcellular location is the chromosome. The protein localises to the cytoplasm. It localises to the stress granule. In terms of biological role, recruits the ubiquitination machinery to RNA polymerase II for polyubiquitination, removal and degradation, when the transcription-coupled nucleotide excision repair (TC-NER) machinery fails to resolve DNA damage. Plays an important role in the activity of long-term repopulating hematopoietic stem cells (LT-HSCs). Is a regulator of stress granule assembly, required for their efficient formation. Required for proper brain development and neocortex lamination. In Mus musculus (Mouse), this protein is Ubiquitin-associated protein 2-like.